Consider the following 160-residue polypeptide: Ribosomal RNA large subunit methyltransferase H (160 aa).

Residues Leu76, Gly108, and 127 to 132 (LGKMTW) each bind S-adenosyl-L-methionine.

It belongs to the RNA methyltransferase RlmH family. Homodimer.

The protein resides in the cytoplasm. The enzyme catalyses pseudouridine(1915) in 23S rRNA + S-adenosyl-L-methionine = N(3)-methylpseudouridine(1915) in 23S rRNA + S-adenosyl-L-homocysteine + H(+). Its function is as follows. Specifically methylates the pseudouridine at position 1915 (m3Psi1915) in 23S rRNA. The protein is Ribosomal RNA large subunit methyltransferase H of Rhizobium etli (strain CIAT 652).